Reading from the N-terminus, the 168-residue chain is Protein-export protein SecB (168 aa).

Belongs to the SecB family. Homotetramer, a dimer of dimers. One homotetramer interacts with 1 SecA dimer.

It localises to the cytoplasm. In terms of biological role, one of the proteins required for the normal export of preproteins out of the cell cytoplasm. It is a molecular chaperone that binds to a subset of precursor proteins, maintaining them in a translocation-competent state. It also specifically binds to its receptor SecA. The polypeptide is Protein-export protein SecB (Haemophilus influenzae (strain PittGG)).